The following is a 541-amino-acid chain: Protein VAPYRIN (541 aa).

Residues 4 to 138 (LIKLDPSNIV…IDSAIKVMFV (135 aa)) form the MSP domain. 10 ANK repeats span residues 176–205 (QGQT…DIEA), 209–238 (VGST…NTEG), 242–271 (SVFR…RVDS), 275–304 (DGNT…RTDV), 309–338 (EGDT…TKYV), 342–372 (LGKT…CAAA), 374–392 (KGEV…VING), 396–425 (NGWT…DLDA), 429–458 (DGYT…DVEA), and 462–491 (KGVS…SREG).

As to quaternary structure, interacts with EX70I at the periarbuscular membrane (PAM) around the arbuscule hyphal tips. In terms of tissue distribution, expressed in roots.

It localises to the cytoplasm. Its subcellular location is the nucleus. The protein localises to the cell membrane. In terms of biological role, required for arbuscular mycorrhizal (AM) symbiosis with AM fungi (e.g. Glomus versiforme and Gigaspora gigantea) both during fungal passage across root epidermis and for arbuscule formation in cortical cells; this symbiosis promotes phosphorus (P) and copper (Cu) uptake. Essential for infection by symbiotic nitrogen-fixing rhizobial bacteria (e.g. Sinorhizobium meliloti) leading to the formation of root nodules. The chain is Protein VAPYRIN from Medicago truncatula (Barrel medic).